The chain runs to 307 residues: Ribosomal RNA small subunit methyltransferase H (307 aa).

S-adenosyl-L-methionine is bound by residues 33-35, aspartate 52, leucine 83, aspartate 97, and glutamine 104; that span reads GGH.

Belongs to the methyltransferase superfamily. RsmH family.

It localises to the cytoplasm. It carries out the reaction cytidine(1402) in 16S rRNA + S-adenosyl-L-methionine = N(4)-methylcytidine(1402) in 16S rRNA + S-adenosyl-L-homocysteine + H(+). Specifically methylates the N4 position of cytidine in position 1402 (C1402) of 16S rRNA. The polypeptide is Ribosomal RNA small subunit methyltransferase H (Campylobacter fetus subsp. fetus (strain 82-40)).